Here is a 166-residue protein sequence, read N- to C-terminus: Phosphopantetheine adenylyltransferase (166 aa).

Serine 8 lines the substrate pocket. Residues 8–9 (SF) and histidine 16 contribute to the ATP site. Lysine 40, threonine 72, and arginine 86 together coordinate substrate. Residues 87 to 89 (GLR), glutamate 97, and 122 to 128 (HSFLSSS) contribute to the ATP site.

This sequence belongs to the bacterial CoaD family. In terms of assembly, homohexamer. It depends on Mg(2+) as a cofactor.

The protein resides in the cytoplasm. It catalyses the reaction (R)-4'-phosphopantetheine + ATP + H(+) = 3'-dephospho-CoA + diphosphate. It functions in the pathway cofactor biosynthesis; coenzyme A biosynthesis; CoA from (R)-pantothenate: step 4/5. In terms of biological role, reversibly transfers an adenylyl group from ATP to 4'-phosphopantetheine, yielding dephospho-CoA (dPCoA) and pyrophosphate. This chain is Phosphopantetheine adenylyltransferase, found in Synechococcus sp. (strain RCC307).